The sequence spans 307 residues: MPSEHPFSDGIPTPNPKETMNDTAQITASYGRRYIVRTPDGTTYEASTRKKRVDFACGDRVRISPVNAEQVVIEDFLPRQSLLYRQDAWKTKLIAANVTQLLIVTAAVPSPSVRLLQRALLAAEAAGIEAVIVLNKADLPETALWREKLKFYETLGYPVIETRALENAGSLRPALQGHSNILLGQSGMGKSTLTNALLGSQTARTGDISAALDSGKHTTTHARLYDLNGETQLIDSPGLQEFGLHHLQAADLPRYFPDFRHLVGQCRFHNCTHRAEPGCAFKAAAQTGAASPERLAFLQGITDELPG.

The interval Met1–Asn21 is disordered. Residues Arg85 to Phe242 form the CP-type G domain. Residues Asn135–Asp138 and Gly184–Thr192 each bind GTP. Residues Cys266, Cys271, His273, and Cys279 each contribute to the Zn(2+) site.

This sequence belongs to the TRAFAC class YlqF/YawG GTPase family. RsgA subfamily. As to quaternary structure, monomer. Associates with 30S ribosomal subunit, binds 16S rRNA. It depends on Zn(2+) as a cofactor.

The protein localises to the cytoplasm. Its function is as follows. One of several proteins that assist in the late maturation steps of the functional core of the 30S ribosomal subunit. Helps release RbfA from mature subunits. May play a role in the assembly of ribosomal proteins into the subunit. Circularly permuted GTPase that catalyzes slow GTP hydrolysis, GTPase activity is stimulated by the 30S ribosomal subunit. The chain is Small ribosomal subunit biogenesis GTPase RsgA from Neisseria meningitidis serogroup B (strain ATCC BAA-335 / MC58).